Consider the following 209-residue polypeptide: Large ribosomal subunit protein uL4 (209 aa).

The interval 45 to 77 (RQGTHKAKERAEVTGSTRKIKKQKGTGTARAGS) is disordered.

This sequence belongs to the universal ribosomal protein uL4 family. As to quaternary structure, part of the 50S ribosomal subunit.

In terms of biological role, one of the primary rRNA binding proteins, this protein initially binds near the 5'-end of the 23S rRNA. It is important during the early stages of 50S assembly. It makes multiple contacts with different domains of the 23S rRNA in the assembled 50S subunit and ribosome. Functionally, forms part of the polypeptide exit tunnel. This is Large ribosomal subunit protein uL4 from Flavobacterium johnsoniae (strain ATCC 17061 / DSM 2064 / JCM 8514 / BCRC 14874 / CCUG 350202 / NBRC 14942 / NCIMB 11054 / UW101) (Cytophaga johnsonae).